The sequence spans 533 residues: Probable protein kinase UbiB (533 aa).

The chain crosses the membrane as a helical span at residues 24 to 44 (LILELPMLPWWLRLLGATLPW). The Protein kinase domain maps to 126–494 (RFEREPLASA…WKGSRHDWLG (369 aa)). ATP contacts are provided by residues 132–140 (LASASVAQV) and Lys-154. Asp-289 acts as the Proton acceptor in catalysis. Residues 510–530 (LGQQLEAWPAWVMLAGGVFLI) form a helical membrane-spanning segment.

This sequence belongs to the ABC1 family. UbiB subfamily.

The protein resides in the cell inner membrane. The protein operates within cofactor biosynthesis; ubiquinone biosynthesis [regulation]. Functionally, is probably a protein kinase regulator of UbiI activity which is involved in aerobic coenzyme Q (ubiquinone) biosynthesis. In Pseudomonas aeruginosa (strain LESB58), this protein is Probable protein kinase UbiB.